The sequence spans 331 residues: Ketol-acid reductoisomerase (NADP(+)) (331 aa).

A KARI N-terminal Rossmann domain is found at 2 to 182 (AKMYYDKDAD…GGTRAGVIET (181 aa)). NADP(+) contacts are provided by residues 25 to 28 (FGSQ), Ser51, Ser53, and 83 to 86 (DEKQ). The active site involves His108. Residue Gly134 participates in NADP(+) binding. Residues 183–328 (TFKEETETDL…KGLREMMAWI (146 aa)) enclose the KARI C-terminal knotted domain. The Mg(2+) site is built by Asp191, Glu195, Glu227, and Glu231. Ser252 is a substrate binding site.

It belongs to the ketol-acid reductoisomerase family. The cofactor is Mg(2+).

The enzyme catalyses (2R)-2,3-dihydroxy-3-methylbutanoate + NADP(+) = (2S)-2-acetolactate + NADPH + H(+). It carries out the reaction (2R,3R)-2,3-dihydroxy-3-methylpentanoate + NADP(+) = (S)-2-ethyl-2-hydroxy-3-oxobutanoate + NADPH + H(+). Its pathway is amino-acid biosynthesis; L-isoleucine biosynthesis; L-isoleucine from 2-oxobutanoate: step 2/4. The protein operates within amino-acid biosynthesis; L-valine biosynthesis; L-valine from pyruvate: step 2/4. Its function is as follows. Involved in the biosynthesis of branched-chain amino acids (BCAA). Catalyzes an alkyl-migration followed by a ketol-acid reduction of (S)-2-acetolactate (S2AL) to yield (R)-2,3-dihydroxy-isovalerate. In the isomerase reaction, S2AL is rearranged via a Mg-dependent methyl migration to produce 3-hydroxy-3-methyl-2-ketobutyrate (HMKB). In the reductase reaction, this 2-ketoacid undergoes a metal-dependent reduction by NADPH to yield (R)-2,3-dihydroxy-isovalerate. In Thermoanaerobacter sp. (strain X514), this protein is Ketol-acid reductoisomerase (NADP(+)).